Consider the following 642-residue polypeptide: Bud site selection protein 5 (642 aa).

The region spanning 224–339 is the N-terminal Ras-GEF domain; that stretch reads EVFRIQLYLN…DIVQLFINKK (116 aa). Residues 412 to 640 enclose the Ras-GEF domain; that stretch reads SPWSLAKTLT…YQVSIAKVPR (229 aa).

In terms of assembly, interacts with AXL2, BEM1, GSP1 and in haploid cells with AXL1.

The protein localises to the bud neck. It is found in the cytoplasm. The protein resides in the cell cortex. Functionally, GDP-GTP exchange factor (GEF) for the small GTPase BUD1/RSR1. Regulates the activity of BUD1 together with BUD2 which is a GTPase-activating protein (GAP) of BUD1. Required to produce both the axial and bipolar patterns of bud site selection. Determines the orientation of division axis. Overexpression can suppress mutations in PRP20 which is the GEF for GSP1. May be a cytoplasmic GEF for GSP1. Might also act on the Ras-like protein CDC42. Appears to bind to Ras proteins but not to activate them. This Saccharomyces cerevisiae (strain ATCC 204508 / S288c) (Baker's yeast) protein is Bud site selection protein 5 (BUD5).